A 119-amino-acid chain; its full sequence is Large ribosomal subunit protein uL18 (119 aa).

It belongs to the universal ribosomal protein uL18 family. As to quaternary structure, part of the 50S ribosomal subunit; part of the 5S rRNA/L5/L18/L25 subcomplex. Contacts the 5S and 23S rRNAs.

Its function is as follows. This is one of the proteins that bind and probably mediate the attachment of the 5S RNA into the large ribosomal subunit, where it forms part of the central protuberance. This chain is Large ribosomal subunit protein uL18, found in Sorangium cellulosum (strain So ce56) (Polyangium cellulosum (strain So ce56)).